Reading from the N-terminus, the 174-residue chain is Ferredoxin-thioredoxin reductase, variable chain, chloroplastic (174 aa).

The transit peptide at 1–62 (MTTGVAVMSS…RTRARLAICC (62 aa)) directs the protein to the chloroplast. Low complexity predominate over residues 69-81 (DSSTGFDSSSSSP). Residues 69–89 (DSSTGFDSSSSSPPEEDEELK) form a disordered region. Phosphoserine occurs at positions 70 and 71.

This sequence belongs to the ferredoxin thioredoxin reductase alpha subunit family. Heterodimer of subunit A (variable subunit) and subunit B (catalytic subunit). Heterodimeric FTR forms a complex with ferredoxin and thioredoxin.

It localises to the plastid. Its subcellular location is the chloroplast. Functionally, variable subunit of the ferredoxin-thioredoxin reductase (FTR), which catalyzes the two-electron reduction of thioredoxins by the electrons provided by reduced ferredoxin. This is Ferredoxin-thioredoxin reductase, variable chain, chloroplastic (FTRV) from Spinacia oleracea (Spinach).